The following is a 427-amino-acid chain: Homoprotocatechuate catabolism bifunctional isomerase/decarboxylase (427 aa).

Approximate repeat units lie at residues 1-202 (MKGT…LENP) and 203-405 (VVDE…VGDE). Positions 276, 278, and 307 each coordinate a divalent metal cation.

The protein belongs to the FAH family. As to quaternary structure, monomer. The cofactor is Mg(2+).

The catalysed reaction is (2E,4Z)-5-hydroxypenta-2,4-diene-1,2,5-tricarboxylate = (3E,5R)-5-carboxy-2-oxohept-3-enedioate. It catalyses the reaction (3E,5R)-5-carboxy-2-oxohept-3-enedioate + H(+) = (4Z)-2-oxohept-4-enedioate + CO2. It participates in aromatic compound metabolism; 4-hydroxyphenylacetate degradation; pyruvate and succinate semialdehyde from 4-hydroxyphenylacetate: step 4/7. Its pathway is aromatic compound metabolism; 4-hydroxyphenylacetate degradation; pyruvate and succinate semialdehyde from 4-hydroxyphenylacetate: step 5/7. Decarboxylates OPET (5-oxo-pent-3-ene-1,2,5-tricarboxylic acid) into HHDD (2-hydroxy-hept-2,4-diene-1,7-dioate) and isomerizes it to OHED (2-oxo-hept-3-ene-1,7-dioate). In Escherichia coli, this protein is Homoprotocatechuate catabolism bifunctional isomerase/decarboxylase (hpcE).